A 199-amino-acid polypeptide reads, in one-letter code: Peptidyl-tRNA hydrolase (199 aa).

Tyrosine 18 contributes to the tRNA binding site. Histidine 23 (proton acceptor) is an active-site residue. The tRNA site is built by tyrosine 72, asparagine 74, and asparagine 120.

Belongs to the PTH family. Monomer.

The protein localises to the cytoplasm. It catalyses the reaction an N-acyl-L-alpha-aminoacyl-tRNA + H2O = an N-acyl-L-amino acid + a tRNA + H(+). In terms of biological role, hydrolyzes ribosome-free peptidyl-tRNAs (with 1 or more amino acids incorporated), which drop off the ribosome during protein synthesis, or as a result of ribosome stalling. Catalyzes the release of premature peptidyl moieties from peptidyl-tRNA molecules trapped in stalled 50S ribosomal subunits, and thus maintains levels of free tRNAs and 50S ribosomes. The chain is Peptidyl-tRNA hydrolase from Bifidobacterium animalis subsp. lactis (strain AD011).